Reading from the N-terminus, the 222-residue chain is Phosphoribosylformylglycinamidine synthase subunit PurQ (222 aa).

In terms of domain architecture, Glutamine amidotransferase type-1 spans 3-222 (SAVVLLPGLN…LFEGALGIAA (220 aa)). Residue Cys-86 is the Nucleophile of the active site. Catalysis depends on residues His-196 and Glu-198.

As to quaternary structure, part of the FGAM synthase complex composed of 1 PurL, 1 PurQ and 2 PurS subunits.

The protein resides in the cytoplasm. It catalyses the reaction N(2)-formyl-N(1)-(5-phospho-beta-D-ribosyl)glycinamide + L-glutamine + ATP + H2O = 2-formamido-N(1)-(5-O-phospho-beta-D-ribosyl)acetamidine + L-glutamate + ADP + phosphate + H(+). The enzyme catalyses L-glutamine + H2O = L-glutamate + NH4(+). Its pathway is purine metabolism; IMP biosynthesis via de novo pathway; 5-amino-1-(5-phospho-D-ribosyl)imidazole from N(2)-formyl-N(1)-(5-phospho-D-ribosyl)glycinamide: step 1/2. In terms of biological role, part of the phosphoribosylformylglycinamidine synthase complex involved in the purines biosynthetic pathway. Catalyzes the ATP-dependent conversion of formylglycinamide ribonucleotide (FGAR) and glutamine to yield formylglycinamidine ribonucleotide (FGAM) and glutamate. The FGAM synthase complex is composed of three subunits. PurQ produces an ammonia molecule by converting glutamine to glutamate. PurL transfers the ammonia molecule to FGAR to form FGAM in an ATP-dependent manner. PurS interacts with PurQ and PurL and is thought to assist in the transfer of the ammonia molecule from PurQ to PurL. The protein is Phosphoribosylformylglycinamidine synthase subunit PurQ of Mesorhizobium japonicum (strain LMG 29417 / CECT 9101 / MAFF 303099) (Mesorhizobium loti (strain MAFF 303099)).